The primary structure comprises 146 residues: Hemoglobin subunit beta-1 (146 aa).

The Globin domain occupies 2–146; the sequence is HWTAEEKALI…VAHALARRYH (145 aa). Residue His92 participates in heme b binding.

Belongs to the globin family. In terms of assembly, heterotetramer of two alpha chains and two beta chains. In terms of tissue distribution, red blood cells.

Functionally, involved in oxygen transport from the lung to the various peripheral tissues. This is Hemoglobin subunit beta-1 from Saara hardwickii (Indian spiny-tailed lizard).